Reading from the N-terminus, the 460-residue chain is Argininosuccinate lyase (460 aa).

The protein belongs to the lyase 1 family. Argininosuccinate lyase subfamily.

The protein localises to the cytoplasm. It carries out the reaction 2-(N(omega)-L-arginino)succinate = fumarate + L-arginine. Its pathway is amino-acid biosynthesis; L-arginine biosynthesis; L-arginine from L-ornithine and carbamoyl phosphate: step 3/3. This is Argininosuccinate lyase from Campylobacter jejuni (strain RM1221).